Here is a 469-residue protein sequence, read N- to C-terminus: Glutamine synthetase (469 aa).

Residues 13 to 97 (HEVKFVDLRF…IRCDILEPGT (85 aa)) form the GS beta-grasp domain. In terms of domain architecture, GS catalytic spans 105 to 469 (PRSIAKRAED…PVEFELYYSV (365 aa)). Mg(2+)-binding residues include E130 and E132. An ATP-binding site is contributed by E208. Mg(2+)-binding residues include E213 and E221. Residues 265–266 (NG) and G266 each bind L-glutamate. Residue H270 coordinates Mg(2+). Residues 272-274 (HMS) and S274 contribute to the ATP site. Residues R322, E328, and R340 each contribute to the L-glutamate site. Residues R340, R345, and K353 each contribute to the ATP site. Position 358 (E358) interacts with Mg(2+). Residue R360 participates in L-glutamate binding. Y398 is subject to O-AMP-tyrosine.

It belongs to the glutamine synthetase family. Oligomer of 12 subunits arranged in the form of two hexameric ring. The cofactor is Mg(2+).

It is found in the cytoplasm. It catalyses the reaction L-glutamate + NH4(+) + ATP = L-glutamine + ADP + phosphate + H(+). The activity of this enzyme could be controlled by adenylation under conditions of abundant glutamine. Catalyzes the ATP-dependent biosynthesis of glutamine from glutamate and ammonia. This Escherichia coli O157:H7 protein is Glutamine synthetase.